Reading from the N-terminus, the 61-residue chain is Conotoxin LiC32 (61 aa).

Positions 1 to 22 (MRCVPVFIILLLLSPSAPSVDA) are cleaved as a signal peptide. The propeptide occupies 23-44 (HPKTKDDVPLASFHDDAKRTLQ). At C60 the chain carries Cysteine amide.

This sequence belongs to the conotoxin T superfamily. Post-translationally, contains 2 disulfide bonds that can be either 'C1-C3, C2-C4' or 'C1-C4, C2-C3', since these disulfide connectivities have been observed for conotoxins with cysteine framework V (for examples, see AC P0DQQ7 and AC P81755). As to expression, expressed by the venom duct.

The protein resides in the secreted. Its function is as follows. Has the ability to interact with the G-protein coupled somatostatin type 3 receptor (SSTR3). The ability was measured in competition binding experiments and the constant of inhibition (Ki) has been evaluated to be 3.5 uM. This Conus lividus (Livid cone) protein is Conotoxin LiC32.